The sequence spans 182 residues: Autophagy-related protein 31 (182 aa).

A disordered region spans residues Leu-105–Glu-134.

The protein localises to the cytoplasm. It localises to the cytoskeleton. The protein resides in the preautophagosomal structure. Functionally, plays a role in starvation-induced autophagy. Involved in mitophagy. Functions with ATG17 and ATG29 at the preautophagosomal structure (PAS) in order to form normal autophagosomes under starvation conditions. May be involved in microtubule function, such as chromosome segregation and karyogamy. This Candida glabrata (strain ATCC 2001 / BCRC 20586 / JCM 3761 / NBRC 0622 / NRRL Y-65 / CBS 138) (Yeast) protein is Autophagy-related protein 31 (CIS1).